The chain runs to 306 residues: Lipoyl synthase (306 aa).

[4Fe-4S] cluster-binding residues include Cys-52, Cys-57, Cys-63, Cys-78, Cys-82, Cys-85, and Ser-289. Positions Trp-64–Lys-278 constitute a Radical SAM core domain.

The protein belongs to the radical SAM superfamily. Lipoyl synthase family. [4Fe-4S] cluster serves as cofactor.

The protein localises to the cytoplasm. It catalyses the reaction [[Fe-S] cluster scaffold protein carrying a second [4Fe-4S](2+) cluster] + N(6)-octanoyl-L-lysyl-[protein] + 2 oxidized [2Fe-2S]-[ferredoxin] + 2 S-adenosyl-L-methionine + 4 H(+) = [[Fe-S] cluster scaffold protein] + N(6)-[(R)-dihydrolipoyl]-L-lysyl-[protein] + 4 Fe(3+) + 2 hydrogen sulfide + 2 5'-deoxyadenosine + 2 L-methionine + 2 reduced [2Fe-2S]-[ferredoxin]. It functions in the pathway protein modification; protein lipoylation via endogenous pathway; protein N(6)-(lipoyl)lysine from octanoyl-[acyl-carrier-protein]: step 2/2. Functionally, catalyzes the radical-mediated insertion of two sulfur atoms into the C-6 and C-8 positions of the octanoyl moiety bound to the lipoyl domains of lipoate-dependent enzymes, thereby converting the octanoylated domains into lipoylated derivatives. The protein is Lipoyl synthase of Leptospira biflexa serovar Patoc (strain Patoc 1 / Ames).